The following is a 718-amino-acid chain: Fatty acid oxidation complex subunit alpha (718 aa).

The interval 1 to 188 (MIYQGESIRV…KVGAVDAVVE (188 aa)) is enoyl-CoA hydratase/isomerase. Asp-295 contacts substrate. Residues 310–718 (TKEIKTAGVL…KSYFDTTSAK (409 aa)) form a 3-hydroxyacyl-CoA dehydrogenase region. Residues Met-324, Asp-343, 400 to 402 (VVE), Lys-407, and Ser-429 each bind NAD(+). The For 3-hydroxyacyl-CoA dehydrogenase activity role is filled by His-450. Asn-453 serves as a coordination point for NAD(+). Substrate is bound by residues Asn-500 and Tyr-658.

The protein in the N-terminal section; belongs to the enoyl-CoA hydratase/isomerase family. It in the C-terminal section; belongs to the 3-hydroxyacyl-CoA dehydrogenase family. In terms of assembly, heterotetramer of two alpha chains (FadB) and two beta chains (FadA).

It catalyses the reaction a (3S)-3-hydroxyacyl-CoA + NAD(+) = a 3-oxoacyl-CoA + NADH + H(+). The enzyme catalyses a (3S)-3-hydroxyacyl-CoA = a (2E)-enoyl-CoA + H2O. The catalysed reaction is a 4-saturated-(3S)-3-hydroxyacyl-CoA = a (3E)-enoyl-CoA + H2O. It carries out the reaction (3S)-3-hydroxybutanoyl-CoA = (3R)-3-hydroxybutanoyl-CoA. It catalyses the reaction a (3Z)-enoyl-CoA = a 4-saturated (2E)-enoyl-CoA. The enzyme catalyses a (3E)-enoyl-CoA = a 4-saturated (2E)-enoyl-CoA. It functions in the pathway lipid metabolism; fatty acid beta-oxidation. Functionally, involved in the aerobic and anaerobic degradation of long-chain fatty acids via beta-oxidation cycle. Catalyzes the formation of 3-oxoacyl-CoA from enoyl-CoA via L-3-hydroxyacyl-CoA. It can also use D-3-hydroxyacyl-CoA and cis-3-enoyl-CoA as substrate. The chain is Fatty acid oxidation complex subunit alpha from Idiomarina loihiensis (strain ATCC BAA-735 / DSM 15497 / L2-TR).